The primary structure comprises 499 residues: Glutamyl-tRNA(Gln) amidotransferase subunit B, chloroplastic/mitochondrial (499 aa).

It belongs to the GatB/GatE family. GatB subfamily. As to quaternary structure, subunit of the heterotrimeric GatCAB amidotransferase (AdT) complex, composed of A, B and C subunits.

It is found in the mitochondrion. Its subcellular location is the plastid. The protein resides in the chloroplast. It catalyses the reaction L-glutamyl-tRNA(Gln) + L-glutamine + ATP + H2O = L-glutaminyl-tRNA(Gln) + L-glutamate + ADP + phosphate + H(+). Its function is as follows. Allows the formation of correctly charged Gln-tRNA(Gln) through the transamidation of misacylated Glu-tRNA(Gln) in chloroplasts and mitochondria. The reaction takes place in the presence of glutamine and ATP through an activated gamma-phospho-Glu-tRNA(Gln). In Ostreococcus lucimarinus (strain CCE9901), this protein is Glutamyl-tRNA(Gln) amidotransferase subunit B, chloroplastic/mitochondrial.